The primary structure comprises 450 residues: UDP-N-acetylglucosamine--peptide N-acetylglucosaminyltransferase stabilizing protein GtfB (450 aa).

It belongs to the GtfB family. As to quaternary structure, forms a heterotetramer with 2 subunits each of GtfA and GtfB. Part of the accessory SecA2/SecY2 protein translocation apparatus required to export cell wall protein GspB.

It is found in the cell membrane. It functions in the pathway protein modification; protein glycosylation. In terms of biological role, required for polymorphic O-glycosylation of GspB, a serine-rich repeat cell wall protein encoded upstream in the same operon. A substrate-binding protein that is part of the accessory SecA2/SecY2 system specifically required to export GspB. The GtfA-GtfB complex adds GlcNAc from UDP-GlcNAc to GspB, attaching the first sugar residue. Upon coexpression in E.coli with GtfA glycosylates GspB constructs. Binds the GspB protein substrate; alone this subunit only recognizes partially glycosylated GspB, but is constrained by GtfA to also recognize unglycosylated protein. The enzyme probably modifies its tertiary conformation by opening and closing its intersubunit interfaces to accomodate the increasingly glycosylated substrate. The chain is UDP-N-acetylglucosamine--peptide N-acetylglucosaminyltransferase stabilizing protein GtfB from Streptococcus gordonii.